We begin with the raw amino-acid sequence, 608 residues long: Sensor protein kinase WalK (608 aa).

Helical transmembrane passes span 14-34 (LVIVYVLLIIIGMQIIGLYFT) and 183-203 (IFIVGTAISLLITVILGFFIA). Residues 204-256 (RTITKPITDMRNQTVEMSRGNYTQRVKIYGNDEIGELALAFNNLSKRVQEAQA) form the HAMP domain. The region spanning 261–331 (EKRRLDSVIT…EIQENNDSFL (71 aa)) is the PAS domain. Residues H271, D274, H364, and E368 each contribute to the Zn(2+) site. The 65-residue stretch at 314–378 (LEDEFKLEEI…QQQVERERRE (65 aa)) folds into the PAC domain. One can recognise a Histidine kinase domain in the interval 382–600 (NVSHELRTPL…SIFITLPCEV (219 aa)). Phosphohistidine; by autocatalysis is present on H385.

Forms homodimers. Forms homooligomers. Post-translationally, autophosphorylated.

The protein localises to the cell membrane. The enzyme catalyses ATP + protein L-histidine = ADP + protein N-phospho-L-histidine.. With respect to regulation, by zinc. Zinc-binding negatively regulates WalK kinase activity and thus autophosphorylation. In terms of biological role, member of the two-component regulatory system WalK/WalR that regulates genes involved in cell wall metabolism, virulence regulation, biofilm production, oxidative stress resistance and antibiotic resistance via direct or indirect regulation of autolysins. Functions as a sensor protein kinase which is autophosphorylated at a histidine residue in the dimerization domain and transfers its phosphate group to the conserved aspartic acid residue in the regulatory domain of WalR. In turn, WalR binds to the upstream promoter regions of the target genes to positively and negatively regulate their expression. This Staphylococcus aureus (strain MRSA252) protein is Sensor protein kinase WalK (walK).